The following is a 225-amino-acid chain: Insulin-induced gene 2 protein (225 aa).

Over 1–28 the chain is Cytoplasmic; sequence MAEGETESPRPKKCGPYISSVTSQSVNV. The chain crosses the membrane as a helical span at residues 29–51; it reads VIRGVVLFFIGVFLALVLNLLQI. Topologically, residues 52-70 are lumenal; sequence QRNVTLFPPDVITSIFSSA. Residues 71 to 88 traverse the membrane as a helical segment; it reads WWVPPCCGTASAVIGLLY. Topologically, residues 89 to 103 are cytoplasmic; sequence PCIDRHLGEPHKFKR. The helical transmembrane segment at 104-126 threads the bilayer; that stretch reads EWSSVMRCVAVFVGINHASAKVD. The Lumenal portion of the chain corresponds to 127–129; sequence FDN. A helical transmembrane segment spans residues 130-148; it reads NFQFSLTLAALSVGLWWTF. The Cytoplasmic portion of the chain corresponds to 149 to 153; it reads DRSRS. The residue at position 151 (Ser151) is a Phosphoserine. The helical transmembrane segment at 154–175 threads the bilayer; it reads GFGLGVGIAFLATVVTQLLVYN. The Lumenal portion of the chain corresponds to 176–189; it reads GVYQYTSPDFLYVR. The chain crosses the membrane as a helical span at residues 190–207; that stretch reads SWLPCIFFAGGITMGNIG. Over 208–225 the chain is Cytoplasmic; the sequence is RQLAMYECKVIAEKSHQE. A Cysteine sulfenic acid (-SOH); alternate modification is found at Cys215. Cys215 participates in a covalent cross-link: Glycyl cysteine thioester (Cys-Gly) (interchain with G-Cter in ubiquitin); alternate. Positions 219–225 match the KxHxx motif; it reads AEKSHQE.

The protein belongs to the INSIG family. In terms of assembly, interacts with SCAP; interaction is direct and only takes place in the presence of sterols; it prevents interaction between SCAP and the coat protein complex II (COPII). Associates with the SCAP-SREBP complex (composed of SCAP and SREBF1/SREBP1 or SREBF2/SREBP2); association is mediated via its interaction with SCAP and only takes place in the presence of sterols. Interacts with RNF139. Interacts with RNF145. Phosphorylation at Ser-151 by PCK1 reduces binding to oxysterol, disrupting the interaction between INSIG2 and SCAP, thereby promoting nuclear translocation of SREBP proteins (SREBF1/SREBP1 or SREBF2/SREBP2) and subsequent transcription of downstream lipogenesis-related genes. Post-translationally, polyubiquitinated by AMFR/gp78 at Cys-215 in some tissues such as adipose tissues, undifferentiated myoblasts and liver, leading to its degradation. In differentiated myotubes, Cys-215 oxidation prevents ubiquitination at the same site, resulting in protein stabilization. In terms of processing, oxidized at Cys-215 in differentiated myotubes, preventing ubiquitination at the same site, and resulting in protein stabilization. As to expression, expressed in liver, testis, kidney, spleen, intestine, brain and adrenal gland.

Its subcellular location is the endoplasmic reticulum membrane. In terms of biological role, oxysterol-binding protein that mediates feedback control of cholesterol synthesis by controlling both endoplasmic reticulum to Golgi transport of SCAP and degradation of HMGCR. Acts as a negative regulator of cholesterol biosynthesis by mediating the retention of the SCAP-SREBP complex in the endoplasmic reticulum, thereby blocking the processing of sterol regulatory element-binding proteins (SREBPs) SREBF1/SREBP1 and SREBF2/SREBP2. Binds oxysterol, including 22-hydroxycholesterol, 24-hydroxycholesterol, 25-hydroxycholesterol and 27-hydroxycholesterol, regulating interaction with SCAP and retention of the SCAP-SREBP complex in the endoplasmic reticulum. In presence of oxysterol, interacts with SCAP, retaining the SCAP-SREBP complex in the endoplasmic reticulum, thereby preventing SCAP from escorting SREBF1/SREBP1 and SREBF2/SREBP2 to the Golgi. Sterol deprivation or phosphorylation by PCK1 reduce oxysterol-binding, disrupting the interaction between INSIG2 and SCAP, thereby promoting Golgi transport of the SCAP-SREBP complex, followed by processing and nuclear translocation of SREBF1/SREBP1 and SREBF2/SREBP2. Also regulates cholesterol synthesis by regulating degradation of HMGCR: initiates the sterol-mediated ubiquitin-mediated endoplasmic reticulum-associated degradation (ERAD) of HMGCR via recruitment of the reductase to the ubiquitin ligase RNF139. The chain is Insulin-induced gene 2 protein from Mus musculus (Mouse).